We begin with the raw amino-acid sequence, 370 residues long: Anthranilate phosphoribosyltransferase (370 aa).

The disordered stretch occupies residues 1 to 27 (MALSAEGSSGGSRGGSPKAEAASVPSW). Residues G107, 110 to 111 (GD), T115, 117 to 120 (NLST), 135 to 143 (KHGNRAASS), and G147 each bind 5-phospho-alpha-D-ribose 1-diphosphate. G107 serves as a coordination point for anthranilate. S119 serves as a coordination point for Mg(2+). Residue N138 coordinates anthranilate. R193 is a binding site for anthranilate. Residues D251 and E252 each coordinate Mg(2+).

The protein belongs to the anthranilate phosphoribosyltransferase family. Homodimer. Mg(2+) serves as cofactor.

It carries out the reaction N-(5-phospho-beta-D-ribosyl)anthranilate + diphosphate = 5-phospho-alpha-D-ribose 1-diphosphate + anthranilate. The protein operates within amino-acid biosynthesis; L-tryptophan biosynthesis; L-tryptophan from chorismate: step 2/5. Functionally, catalyzes the transfer of the phosphoribosyl group of 5-phosphorylribose-1-pyrophosphate (PRPP) to anthranilate to yield N-(5'-phosphoribosyl)-anthranilate (PRA). This Mycobacterium bovis (strain ATCC BAA-935 / AF2122/97) protein is Anthranilate phosphoribosyltransferase.